A 491-amino-acid chain; its full sequence is Chromosomal replication initiator protein DnaA (491 aa).

Residues 1 to 69 (MTTWDKCLKK…TIQECHGNDL (69 aa)) form a domain I, interacts with DnaA modulators region. Residues 69–154 (LIIEYSNKKF…KEDEEYSFGL (86 aa)) are domain II. Positions 155–371 (PLKEKYVFDS…GALNRVLTTS (217 aa)) are domain III, AAA+ region. ATP-binding residues include Gly199, Gly201, Lys202, and Thr203. A domain IV, binds dsDNA region spans residues 372–491 (KFNHKDPTIE…YELLLDKISR (120 aa)).

The protein belongs to the DnaA family. In terms of assembly, oligomerizes as a right-handed, spiral filament on DNA at oriC.

It is found in the cytoplasm. Functionally, plays an essential role in the initiation and regulation of chromosomal replication. ATP-DnaA binds to the origin of replication (oriC) to initiate formation of the DNA replication initiation complex once per cell cycle. Binds the DnaA box (a 9 base pair repeat at the origin) and separates the double-stranded (ds)DNA. Forms a right-handed helical filament on oriC DNA; dsDNA binds to the exterior of the filament while single-stranded (ss)DNA is stabiized in the filament's interior. The ATP-DnaA-oriC complex binds and stabilizes one strand of the AT-rich DNA unwinding element (DUE), permitting loading of DNA polymerase. After initiation quickly degrades to an ADP-DnaA complex that is not apt for DNA replication. Binds acidic phospholipids. The sequence is that of Chromosomal replication initiator protein DnaA from Francisella tularensis subsp. holarctica (strain FTNF002-00 / FTA).